The sequence spans 545 residues: Acetyltransferase BOT5 (545 aa).

The first 19 residues, 1 to 19 (MATIPLFFSLILFLRLYHA), serve as a signal peptide directing secretion. N-linked (GlcNAc...) asparagine glycans are attached at residues asparagine 70 and asparagine 198. Histidine 208 serves as the catalytic Proton acceptor. Asparagine 346 and asparagine 445 each carry an N-linked (GlcNAc...) asparagine glycan. The segment at 466-493 (GAGNQKSSSTRKAARHTEPTQAQTQPGR) is disordered.

This sequence belongs to the plant acyltransferase family.

It functions in the pathway secondary metabolite biosynthesis. Functionally, acetyltransferase; part of the gene cluster that mediates the biosynthesis of botrydial. Botrydial is necessary for colonization of plant tissue by the T4 strain. It is a strain-dependent virulence factor since highly aggressive strains like SAS56 or B05 still retain substantial virulence when botrydial synthesis is impaired, since they produce also botcinic acid. The first step of botrydial biosynthesis is performed by the sesquiterpene synthase BOT2 which catalyzes the cyclization of farnesyl diphosphate (FPP) to presilphiperfolan-8-beta-ol (PSP). The cytochrome P450 monooxygenase BOT4 then catalyzes the hydroxylation at C-4 to give a probotryane intermediate. Acetylation of the hydroxyl at C-4 is carried out by the acetyltransferase BOT5, followed by the combined action of the P450 monooxygenases BOT3 and BOT1, to yield finally the glycol, via the regio- and stereospecific hydroxylations at C-10 and C-15 of the probotryane intermediates, respectively. The cleavage of the C10-C15 bond of probotryane skeleton is an intriguing and chemically important reaction, which could be mediated by some of the monooxygenases or by a combination of them. It is possible that either BOT3 or BOT1 would oxidize either the 10- or the 15-hydroxy group to the hydroperoxide derivative, which would then undergo heterolytic fragmentation to give the dialdehyde botrydial. Finally, the dehydrogenase BOT7 might be involved in the conversion of botrydial to dihydrobotrydial. The sequence is that of Acetyltransferase BOT5 from Botryotinia fuckeliana (Noble rot fungus).